Consider the following 355-residue polypeptide: 3-dehydroquinate synthase (355 aa).

Residues 105–109, 129–130, lysine 142, lysine 151, and 169–172 each bind NAD(+); these read GVVGD, TS, and TLKT. Residues glutamate 184, histidine 246, and histidine 263 each contribute to the Zn(2+) site.

Belongs to the sugar phosphate cyclases superfamily. Dehydroquinate synthase family. Co(2+) is required as a cofactor. Requires Zn(2+) as cofactor. It depends on NAD(+) as a cofactor.

Its subcellular location is the cytoplasm. It carries out the reaction 7-phospho-2-dehydro-3-deoxy-D-arabino-heptonate = 3-dehydroquinate + phosphate. It participates in metabolic intermediate biosynthesis; chorismate biosynthesis; chorismate from D-erythrose 4-phosphate and phosphoenolpyruvate: step 2/7. Functionally, catalyzes the conversion of 3-deoxy-D-arabino-heptulosonate 7-phosphate (DAHP) to dehydroquinate (DHQ). This is 3-dehydroquinate synthase from Streptococcus agalactiae serotype Ia (strain ATCC 27591 / A909 / CDC SS700).